Reading from the N-terminus, the 118-residue chain is Large ribosomal subunit protein bL19 (118 aa).

It belongs to the bacterial ribosomal protein bL19 family.

This protein is located at the 30S-50S ribosomal subunit interface and may play a role in the structure and function of the aminoacyl-tRNA binding site. This chain is Large ribosomal subunit protein bL19, found in Beutenbergia cavernae (strain ATCC BAA-8 / DSM 12333 / CCUG 43141 / JCM 11478 / NBRC 16432 / NCIMB 13614 / HKI 0122).